We begin with the raw amino-acid sequence, 132 residues long: Small ribosomal subunit protein uS8c (132 aa).

It belongs to the universal ribosomal protein uS8 family. In terms of assembly, part of the 30S ribosomal subunit.

It localises to the plastid. It is found in the chloroplast. One of the primary rRNA binding proteins, it binds directly to 16S rRNA central domain where it helps coordinate assembly of the platform of the 30S subunit. The polypeptide is Small ribosomal subunit protein uS8c (rps8) (Illicium oligandrum (Star anise)).